The sequence spans 463 residues: Asparagine--tRNA ligase (463 aa).

This sequence belongs to the class-II aminoacyl-tRNA synthetase family. In terms of assembly, homodimer.

The protein localises to the cytoplasm. The enzyme catalyses tRNA(Asn) + L-asparagine + ATP = L-asparaginyl-tRNA(Asn) + AMP + diphosphate + H(+). In Clostridium tetani (strain Massachusetts / E88), this protein is Asparagine--tRNA ligase.